We begin with the raw amino-acid sequence, 198 residues long: Protein GrpE (198 aa).

Belongs to the GrpE family. As to quaternary structure, homodimer.

It is found in the cytoplasm. Functionally, participates actively in the response to hyperosmotic and heat shock by preventing the aggregation of stress-denatured proteins, in association with DnaK and GrpE. It is the nucleotide exchange factor for DnaK and may function as a thermosensor. Unfolded proteins bind initially to DnaJ; upon interaction with the DnaJ-bound protein, DnaK hydrolyzes its bound ATP, resulting in the formation of a stable complex. GrpE releases ADP from DnaK; ATP binding to DnaK triggers the release of the substrate protein, thus completing the reaction cycle. Several rounds of ATP-dependent interactions between DnaJ, DnaK and GrpE are required for fully efficient folding. In Lysinibacillus sphaericus (Bacillus sphaericus), this protein is Protein GrpE.